A 94-amino-acid chain; its full sequence is Putative septation protein SpoVG (94 aa).

It belongs to the SpoVG family.

Its function is as follows. Could be involved in septation. This Acholeplasma laidlawii (strain PG-8A) protein is Putative septation protein SpoVG.